Reading from the N-terminus, the 1050-residue chain is ATP-dependent DNA helicase MPH1 (1050 aa).

The 168-residue stretch at 95–262 folds into the Helicase ATP-binding domain; it reads IVQRAFYHNL…EIIDNLNISK (168 aa). 108–115 contributes to the ATP binding site; the sequence is LPTGLGKT. The DEAH box motif lies at 210–213; it reads DEAH. In terms of domain architecture, Helicase C-terminal spans 431–631; sequence KIEAMMEELD…LIDLKEQNRM (201 aa). Disordered stretches follow at residues 493-524 and 743-821; these read DESN…AQIN and DSDE…PPKR. Residues 499 to 508 show a composition bias toward basic residues; that stretch reads KKSKGKRVGK. Over residues 786–799 the composition is skewed to basic and acidic residues; the sequence is RTLDQHHSASEERG. Polar residues predominate over residues 800–810; sequence INSNFSHESNL.

This sequence belongs to the DEAD box helicase family. DEAH subfamily. FANCM sub-subfamily. In terms of assembly, interacts with the MHF histone-fold complex to form the FANCM-MHF complex.

It is found in the nucleus. It carries out the reaction ATP + H2O = ADP + phosphate + H(+). In terms of biological role, ATP-dependent DNA helicase involved in DNA damage repair by homologous recombination and in genome maintenance. Capable of unwinding D-loops. Plays a role in limiting crossover recombinants during mitotic DNA double-strand break (DSB) repair. Component of a FANCM-MHF complex which promotes gene conversion at blocked replication forks, probably by reversal of the stalled fork. This is ATP-dependent DNA helicase MPH1 from Scheffersomyces stipitis (strain ATCC 58785 / CBS 6054 / NBRC 10063 / NRRL Y-11545) (Yeast).